The following is a 433-amino-acid chain: E3 ubiquitin-protein ligase RNF26 (433 aa).

5 consecutive transmembrane segments (helical) span residues 24–44 (LNFL…AFVY), 60–80 (GVLL…CGGL), 147–169 (VINS…VLAL), 183–203 (VVAA…ILLW), and 220–240 (LASF…VLAV). The segment at 380–422 (CVICQDQSKTVLLLPCRHLCLCQACTEILMRHPVYHRNCPLCR) adopts an RING-type zinc-finger fold.

Interacts with INCA1. Interacts with TMEM43, ENDOD1, TMEM33 and TMED1 to form a complex capable of modulating innate immune signaling through the cGAS-STING pathway. Interacts with UBE2J1; this interaction is important for SQSTM1 ubiquitination. In terms of tissue distribution, ubiquitous. Up-regulated in several cancer cell lines.

Its subcellular location is the endoplasmic reticulum membrane. It catalyses the reaction S-ubiquitinyl-[E2 ubiquitin-conjugating enzyme]-L-cysteine + [acceptor protein]-L-lysine = [E2 ubiquitin-conjugating enzyme]-L-cysteine + N(6)-ubiquitinyl-[acceptor protein]-L-lysine.. The protein operates within protein modification; protein ubiquitination. E3 ubiquitin-protein ligase that plays a key role in endosome organization by retaining vesicles in the perinuclear cloud. Acts as a platform for perinuclear positioning of the endosomal system by mediating ubiquitination of SQSTM1 through interaction with the ubiquitin conjugating enzyme UBE2J1. Ubiquitinated SQSTM1 attracts specific vesicle-associated adapters, forming a molecular bridge that restrains cognate vesicles in the perinuclear region and organizes the endosomal pathway for efficient cargo transport. Also acts as a regulator of type I interferon production in response to viral infection by mediating the formation of 'Lys-11'-linked polyubiquitin chains on TMEM173/STING, leading to stabilize TMEM173/STING. Also required to limit type I interferon response by promoting autophagic degradation of IRF3. This chain is E3 ubiquitin-protein ligase RNF26, found in Homo sapiens (Human).